The primary structure comprises 251 residues: Cell division protein ZapD (251 aa).

This sequence belongs to the ZapD family. Interacts with FtsZ.

It is found in the cytoplasm. In terms of biological role, cell division factor that enhances FtsZ-ring assembly. Directly interacts with FtsZ and promotes bundling of FtsZ protofilaments, with a reduction in FtsZ GTPase activity. The sequence is that of Cell division protein ZapD from Paraburkholderia phytofirmans (strain DSM 17436 / LMG 22146 / PsJN) (Burkholderia phytofirmans).